Here is a 113-residue protein sequence, read N- to C-terminus: Hydrogenase maturation factor HypA (113 aa).

Position 2 (H2) interacts with Ni(2+). The Zn(2+) site is built by C73, C76, C89, and C92.

Belongs to the HypA/HybF family.

Its function is as follows. Involved in the maturation of [NiFe] hydrogenases. Required for nickel insertion into the metal center of the hydrogenase. The polypeptide is Hydrogenase maturation factor HypA (Actinobacillus succinogenes (strain ATCC 55618 / DSM 22257 / CCUG 43843 / 130Z)).